The chain runs to 453 residues: Tubulin alpha chain (453 aa).

Residue Gln11 coordinates GTP. Lys40 carries the post-translational modification N6-acetyllysine. GTP is bound by residues Glu71, Gly144, Thr145, Thr179, Asn206, and Asn228. A Mg(2+)-binding site is contributed by Glu71. Residue Glu254 is part of the active site.

This sequence belongs to the tubulin family. As to quaternary structure, dimer of alpha and beta chains. A typical microtubule is a hollow water-filled tube with an outer diameter of 25 nm and an inner diameter of 15 nM. Alpha-beta heterodimers associate head-to-tail to form protofilaments running lengthwise along the microtubule wall with the beta-tubulin subunit facing the microtubule plus end conferring a structural polarity. Microtubules usually have 13 protofilaments but different protofilament numbers can be found in some organisms and specialized cells. Mg(2+) serves as cofactor. Undergoes a tyrosination/detyrosination cycle, the cyclic removal and re-addition of a C-terminal tyrosine residue by the enzymes tubulin tyrosine carboxypeptidase (TTCP) and tubulin tyrosine ligase (TTL), respectively. Post-translationally, acetylation of alpha chains at Lys-40 stabilizes microtubules and affects affinity and processivity of microtubule motors. This modification has a role in multiple cellular functions, ranging from cell motility, cell cycle progression or cell differentiation to intracellular trafficking and signaling.

It is found in the cytoplasm. The protein resides in the cytoskeleton. It carries out the reaction GTP + H2O = GDP + phosphate + H(+). Functionally, tubulin is the major constituent of microtubules, a cylinder consisting of laterally associated linear protofilaments composed of alpha- and beta-tubulin heterodimers. Microtubules grow by the addition of GTP-tubulin dimers to the microtubule end, where a stabilizing cap forms. Below the cap, tubulin dimers are in GDP-bound state, owing to GTPase activity of alpha-tubulin. This chain is Tubulin alpha chain, found in Plasmodium falciparum (isolate K1 / Thailand).